The following is a 281-amino-acid chain: 2-dehydro-3-deoxyphosphooctonate aldolase (281 aa).

This sequence belongs to the KdsA family.

The protein localises to the cytoplasm. The catalysed reaction is D-arabinose 5-phosphate + phosphoenolpyruvate + H2O = 3-deoxy-alpha-D-manno-2-octulosonate-8-phosphate + phosphate. It participates in carbohydrate biosynthesis; 3-deoxy-D-manno-octulosonate biosynthesis; 3-deoxy-D-manno-octulosonate from D-ribulose 5-phosphate: step 2/3. Its pathway is bacterial outer membrane biogenesis; lipopolysaccharide biosynthesis. This is 2-dehydro-3-deoxyphosphooctonate aldolase from Pseudomonas aeruginosa (strain UCBPP-PA14).